The following is a 1856-amino-acid chain: Golgi-specific brefeldin A-resistance guanine nucleotide exchange factor 1 (1856 aa).

The segment at 1–211 (MVDKNIYIIQ…EPKSYVGTNM (211 aa)) is DCB (dimerization and cyclophiln-binding); DCB:DCB domain and DCB:HUS domain interaction. The interaction with RAB1B stretch occupies residues 1 to 378 (MVDKNIYIIQ…SVHDMDYVNP (378 aa)). Disordered regions lie at residues 215–256 (KMRA…NGAT) and 291–370 (DSGL…SASV). Positions 227 to 241 (WKKQKRSPRPPRHMT) are enriched in basic residues. A compositionally biased stretch (polar residues) spans 316-328 (RESTTTESGSNEI). S349 and S352 each carry phosphoserine. Residue T505 is modified to Phosphothreonine. An HUS (homology upstream of Sec7); DCB:HUS domain interaction region spans residues 528 to 548 (RIPSFVTELYINYDCDYYCAN). The tract at residues 601–626 (QEKKETSRPSYEAVDSTQEANSTERA) is disordered. A compositionally biased stretch (polar residues) spans 615–625 (DSTQEANSTER). The SEC7 domain occupies 690–880 (ELIEIKNKKK…EDMYHAIKNE (191 aa)). Positions 884 to 1370 (MPEEQTGLVR…LSRPSPSPLV (487 aa)) are phosphatidylinositol-phosphate binding; required for translocation to the leading edge and for ARF1 activation upon GPCR signaling. The segment covering 1284–1294 (TARADAPDAGA) has biased composition (low complexity). The tract at residues 1284–1333 (TARADAPDAGAQSDSELPSYHQNDVSLDRGYTSDSEVYTDHGRPGKIHRS) is disordered. Over residues 1295–1308 (QSDSELPSYHQNDV) the composition is skewed to polar residues. The residue at position 1296 (S1296) is a Phosphoserine. Y1314 carries the post-translational modification Phosphotyrosine. Phosphoserine is present on residues S1316, S1318, and S1333. Phosphothreonine; by AMPK is present on T1335. Disordered regions lie at residues 1430-1484 (CKSQ…EGVP), 1739-1806 (THLT…PPLI), and 1837-1856 (PVPLLSTPRPTDPIPTSEVN). Residues 1432–1446 (SQDKRGKSHKYDSKG) show a composition bias toward basic and acidic residues. A phosphoserine mark is found at S1475 and S1781. Positions 1775–1793 (SSSSPGSPVASSPSRLSPS) are enriched in low complexity.

Can form homodimers and probably homotetramers. Interacts with COPG1; the interaction is independent on ARF1 activation. Interacts with ARF1, ARF3, ARF4 and ARF5. Interacts with RAB1B (GTP-bound form); required for GBF1 membrane association. Interacts with GGA1, GGA2 and GGA3. Interacts with USO1. Interacts (via SEC7 domain) with PNPLA2 (via C-terminus); the interaction is direct. Can form homodimers and probably homotetramers. Interacts with COPG1; the interaction is independent on ARF1 activation. Interacts with ARF1, ARF3, ARF4 and ARF5. Interacts with RAB1B (GTP-bound form); required for GBF1 membrane association. Interacts with GGA1, GGA2 and GGA3. Interacts with USO1. Interacts (via SEC7 domain) with PNPLA2 (via C-terminus); the interaction is direct. Interacts with ARMH3.

Its subcellular location is the golgi apparatus. It is found in the cis-Golgi network. The protein localises to the endoplasmic reticulum-Golgi intermediate compartment. The protein resides in the trans-Golgi network. It localises to the cytoplasm. Its subcellular location is the lipid droplet. It is found in the membrane. Its activity is regulated as follows. Inhibited by brefeldin A (BFA). Inhibited by golgicide A (GCA). Guanine-nucleotide exchange factor (GEF) for members of the Arf family of small GTPases involved in trafficking in the early secretory pathway; its GEF activity initiates the coating of nascent vesicles via the localized generation of activated ARFs through replacement of GDP with GTP. Recruitment to cis-Golgi membranes requires membrane association of Arf-GDP and can be regulated by ARF1, ARF3, ARF4 and ARF5. Involved in the recruitment of the COPI coat complex to cellular membranes such as the endoplasmic reticulum exit sites (ERES), and the endoplasmic reticulum-Golgi intermediate (ERGIC) and cis-Golgi compartments implicating ARF1 activation. Involved in COPI vesicle-dependent retrograde transport from the ERGIC and cis-Golgi compartments to the endoplasmic reticulum (ER). Involved in the trans-Golgi network recruitment of GGA1, GGA2, GGA3, BIG1, BIG2, and the AP-1 adaptor protein complex related to chlathrin-dependent transport; the function requires its GEF activity (probably at least in part on ARF4 and ARF5). Has GEF activity towards ARF1. Has in vitro GEF activity towards ARF5. Involved in the processing of PSAP. Required for the assembly of the Golgi apparatus. The AMPK-phosphorylated form is involved in Golgi disassembly during mitotis and under stress conditions. May be involved in the COPI vesicle-dependent recruitment of PNPLA2 to lipid droplets. In neutrophils, involved in G protein-coupled receptor (GPCR)-mediated chemotaxis und superoxide production. Proposed to be recruited by phosphatidylinositol-phosphates generated upon GPCR stimulation to the leading edge where it recruits and activates ARF1, and is involved in recruitment of GIT2 and the NADPH oxidase complex. Plays a role in maintaining mitochondrial morphology. This chain is Golgi-specific brefeldin A-resistance guanine nucleotide exchange factor 1 (GBF1), found in Cricetulus griseus (Chinese hamster).